Consider the following 541-residue polypeptide: Protein wntless homolog (541 aa).

The Cytoplasmic portion of the chain corresponds to Met1 to Cys15. Residues Ile16–Ala36 form a helical membrane-spanning segment. Residues Pro37–Lys232 are Lumenal-facing. The interaction with Wnt proteins stretch occupies residues Met101–Pro202. The chain crosses the membrane as a helical span at residues Val233–Trp253. Residues Arg254–Lys268 are Cytoplasmic-facing. The helical transmembrane segment at Val269 to Ile289 threads the bilayer. Topologically, residues Gly290–Arg303 are lumenal. The helical transmembrane segment at Gln304–Met324 threads the bilayer. The Cytoplasmic portion of the chain corresponds to Asp325–His331. The helical transmembrane segment at Ile332–Phe352 threads the bilayer. Over Asp353 to Ala380 the chain is Lumenal. A helical membrane pass occupies residues Phe381 to Phe401. At Gln402–Arg431 the chain is on the cytoplasmic side. Residues Phe432–Val452 traverse the membrane as a helical segment. Residues Ser453–Ser471 are Lumenal-facing. Residues Ala472–Tyr492 traverse the membrane as a helical segment. The Cytoplasmic segment spans residues Ala493–Glu541.

Belongs to the wntless family. As to quaternary structure, interacts with WNT3A. Interacts with WNT1, WNT3 and WNT5A. Post-translationally, N-glycosylated. In terms of tissue distribution, expressed in the brain, skeletal muscle, heart muscle, lung, gut, liver, and kidney (at protein level). In the brain, expressed in the cortex, striatum, ventral tegmentum, nucleus accumbens and to a lesser extent in the Purkinjie cells in the cerebellum. Expressed in eye iridocorneal angle.

It localises to the golgi apparatus membrane. It is found in the cytoplasmic vesicle membrane. The protein resides in the cell membrane. Its subcellular location is the endoplasmic reticulum membrane. The protein localises to the early endosome membrane. Regulates Wnt proteins sorting and secretion in a feedback regulatory mechanism. This reciprocal interaction plays a key role in the regulation of expression, subcellular location, binding and organelle-specific association of Wnt proteins. Also plays an important role in establishment of the anterior-posterior body axis formation during development. In Rattus norvegicus (Rat), this protein is Protein wntless homolog (Wls).